A 614-amino-acid chain; its full sequence is Dolichyl-diphosphooligosaccharide--protein glycosyltransferase subunit 1A (614 aa).

Positions 1–25 (MKQSSVVDLLLLLLAIALLATPAFS) are cleaved as a signal peptide. At 26-432 (DLVLSKVERR…QVYYKFSNIN (407 aa)) the chain is on the lumenal side. Residues asparagine 94 and asparagine 299 are each glycosylated (N-linked (GlcNAc...) asparagine). Lysine 311 is covalently cross-linked (Glycyl lysine isopeptide (Lys-Gly) (interchain with G-Cter in ubiquitin)). Residue asparagine 352 is glycosylated (N-linked (GlcNAc...) asparagine). The chain crosses the membrane as a helical span at residues 433–453 (LLSEPLMLISGFFILFITCII). Residues 454 to 614 (YTRADISISK…EDLLEFIDEI (161 aa)) lie on the Cytoplasmic side of the membrane.

Belongs to the OST1 family. In terms of assembly, component of the oligosaccharyltransferase (OST) complex.

It is found in the endoplasmic reticulum membrane. It participates in protein modification; protein glycosylation. Its function is as follows. Subunit of the oligosaccharyl transferase (OST) complex that catalyzes the initial transfer of a defined glycan (Glc(3)Man(9)GlcNAc(2) in eukaryotes) from the lipid carrier dolichol-pyrophosphate to an asparagine residue within an Asn-X-Ser/Thr consensus motif in nascent polypeptide chains, the first step in protein N-glycosylation. N-glycosylation occurs cotranslationally and the complex associates with the Sec61 complex at the channel-forming translocon complex that mediates protein translocation across the endoplasmic reticulum (ER). All subunits are required for a maximal enzyme activity. The sequence is that of Dolichyl-diphosphooligosaccharide--protein glycosyltransferase subunit 1A (OST1A) from Arabidopsis thaliana (Mouse-ear cress).